We begin with the raw amino-acid sequence, 383 residues long: Pyruvate synthase subunit PorA (383 aa).

Heterotetramer of one alpha, one beta, one delta and one gamma chain.

It carries out the reaction 2 oxidized [2Fe-2S]-[ferredoxin] + pyruvate + CoA = 2 reduced [2Fe-2S]-[ferredoxin] + acetyl-CoA + CO2 + H(+). This is Pyruvate synthase subunit PorA (porA) from Methanothermobacter thermautotrophicus (strain ATCC 29096 / DSM 1053 / JCM 10044 / NBRC 100330 / Delta H) (Methanobacterium thermoautotrophicum).